Here is a 938-residue protein sequence, read N- to C-terminus: Isoleucine--tRNA ligase (938 aa).

The 'HIGH' region motif lies at 58–68; it reads PYANGSIHIGH. Glu561 contributes to the L-isoleucyl-5'-AMP binding site. Positions 602 to 606 match the 'KMSKS' region motif; the sequence is KMSKS. Lys605 is an ATP binding site. Positions 901, 904, 921, and 924 each coordinate Zn(2+).

The protein belongs to the class-I aminoacyl-tRNA synthetase family. IleS type 1 subfamily. In terms of assembly, monomer. Zn(2+) is required as a cofactor.

It is found in the cytoplasm. It carries out the reaction tRNA(Ile) + L-isoleucine + ATP = L-isoleucyl-tRNA(Ile) + AMP + diphosphate. In terms of biological role, catalyzes the attachment of isoleucine to tRNA(Ile). As IleRS can inadvertently accommodate and process structurally similar amino acids such as valine, to avoid such errors it has two additional distinct tRNA(Ile)-dependent editing activities. One activity is designated as 'pretransfer' editing and involves the hydrolysis of activated Val-AMP. The other activity is designated 'posttransfer' editing and involves deacylation of mischarged Val-tRNA(Ile). In Baumannia cicadellinicola subsp. Homalodisca coagulata, this protein is Isoleucine--tRNA ligase.